The sequence spans 103 residues: Large ribosomal subunit protein bL21 (103 aa).

Belongs to the bacterial ribosomal protein bL21 family. As to quaternary structure, part of the 50S ribosomal subunit. Contacts protein L20.

Its function is as follows. This protein binds to 23S rRNA in the presence of protein L20. The polypeptide is Large ribosomal subunit protein bL21 (Mycobacterium tuberculosis (strain ATCC 25618 / H37Rv)).